The sequence spans 289 residues: G1/S-specific cyclin-D2 (289 aa).

The region spanning 26 to 151 (VLQNLLTIEE…VVLGKLKWNL (126 aa)) is the Cyclin N-terminal domain. Positions 264-289 (DQRDGSKSEDELDQASTPTDVRDIDL) are disordered. Ser271 is subject to Phosphoserine. Phosphothreonine is present on Thr280.

It belongs to the cyclin family. Cyclin D subfamily. As to quaternary structure, interacts with either CDK4 or CDK6 protein kinase to form a serine/threonine kinase holoenzyme complex. The cyclin subunit imparts substrate specificity to the complex. In terms of processing, phosphorylation at Thr-280 by MAP kinases is required for ubiquitination and degradation by the DCX(AMBRA1) complex. Ubiquitinated by the DCX(AMBRA1) complex during the transition from G1 to S cell phase, leading to its degradation: ubiquitination is dependent on Thr-280 phosphorylation. The DCX(AMBRA1) complex represents the major regulator of CCND2 stability during the G1/S transition. Polyubiquitinated by the SCF(FBXL2) complex, leading to proteasomal degradation.

It localises to the nucleus. Its subcellular location is the cytoplasm. The protein localises to the nucleus membrane. Its function is as follows. Regulatory component of the cyclin D2-CDK4 (DC) complex that phosphorylates and inhibits members of the retinoblastoma (RB) protein family including RB1 and regulates the cell-cycle during G(1)/S transition. Phosphorylation of RB1 allows dissociation of the transcription factor E2F from the RB/E2F complex and the subsequent transcription of E2F target genes which are responsible for the progression through the G(1) phase. Hypophosphorylates RB1 in early G(1) phase. Cyclin D-CDK4 complexes are major integrators of various mitogenenic and antimitogenic signals. This is G1/S-specific cyclin-D2 from Homo sapiens (Human).